Here is a 601-residue protein sequence, read N- to C-terminus: Protein NRT1/ PTR FAMILY 4.4 (601 aa).

A run of 2 helical transmembrane segments spans residues alanine 44 to asparagine 64 and alanine 82 to leucine 102. At threonine 112 the chain carries Phosphothreonine. The next 10 membrane-spanning stretches (helical) occupy residues methionine 113–leucine 133, threonine 160–isoleucine 180, phenylalanine 198–valine 218, valine 228–threonine 248, isoleucine 337–glutamine 357, alanine 386–leucine 406, leucine 420–valine 440, valine 453–phenylalanine 473, phenylalanine 493–valine 513, and histidine 544–serine 564.

Belongs to the major facilitator superfamily. Proton-dependent oligopeptide transporter (POT/PTR) (TC 2.A.17) family. As to expression, expressed in shoots, roots and stems.

Its subcellular location is the membrane. The polypeptide is Protein NRT1/ PTR FAMILY 4.4 (NPF4.4) (Arabidopsis thaliana (Mouse-ear cress)).